Here is an 85-residue protein sequence, read N- to C-terminus: Keratin-associated protein 7-1 (85 aa).

Residues Gly37–Tyr82 are 12 X 2 AA repeats of G-[YCGS].

The protein belongs to the KRTAP type 7 family. In terms of assembly, interacts with wool keratins. As to expression, wool.

In terms of biological role, in the wool cortex, wool keratin intermediate filaments are embedded in an interfilamentous matrix, consisting of hair keratin-associated proteins (KRTAP), which are essential for the formation of a rigid and resistant wool shaft through their extensive disulfide bond cross-linking with abundant cysteine residues of wool keratins. The matrix proteins include the high-sulfur and high-glycine-tyrosine keratins. The sequence is that of Keratin-associated protein 7-1 (KRTAP7-1) from Ovis aries (Sheep).